We begin with the raw amino-acid sequence, 106 residues long: MALKIRLRQHGRTNRSFFRLVVTDARSPRDGKYVEALGWYNPVEAEDDKKLFFKADRIQHWLNLGAELTESAASLIKKTSPEIIRAQTEKKLNSLAKAATKRKKKD.

The protein belongs to the bacterial ribosomal protein bS16 family.

This is Small ribosomal subunit protein bS16 from Protochlamydia amoebophila (strain UWE25).